The primary structure comprises 260 residues: uncharacterized protein (260 aa).

Residues 7-67 (VPALTRAIDI…DHQENFCLWT (61 aa)) enclose the HTH iclR-type domain. Residues 28–47 (AATIIDTLGIPKSTAYLLLN) constitute a DNA-binding region (H-T-H motif). Residues 82–251 (LRELARPRLT…ARDISRLLGW (170 aa)) enclose the IclR-ED domain.

This is an uncharacterized protein from Escherichia coli (strain K12).